A 462-amino-acid chain; its full sequence is Indoleacetamide hydrolase (462 aa).

Active-site charge relay system residues include Lys74 and Ser149. Catalysis depends on Ser173, which acts as the Acyl-ester intermediate.

This sequence belongs to the amidase family.

It functions in the pathway plant hormone metabolism; auxin biosynthesis. Functionally, hydrolyzes indole-3-acetamide (IAM) into indole-3-acetic acid (IAA). The protein is Indoleacetamide hydrolase (iaaH) of Allorhizobium ampelinum (strain ATCC BAA-846 / DSM 112012 / S4) (Agrobacterium vitis (strain S4)).